A 282-amino-acid chain; its full sequence is tRNA (guanine-N(1)-)-methyltransferase (282 aa).

S-adenosyl-L-methionine-binding positions include Gly157 and 177–182 (VGDYIL).

Belongs to the RNA methyltransferase TrmD family. Homodimer.

It is found in the cytoplasm. The enzyme catalyses guanosine(37) in tRNA + S-adenosyl-L-methionine = N(1)-methylguanosine(37) in tRNA + S-adenosyl-L-homocysteine + H(+). Its function is as follows. Specifically methylates guanosine-37 in various tRNAs. The protein is tRNA (guanine-N(1)-)-methyltransferase of Rickettsia bellii (strain RML369-C).